The chain runs to 514 residues: Monocarboxylate transporter 10 (514 aa).

Positions 1 to 64 are disordered; the sequence is MVPSQEEPAA…TGNQEPPEPP (64 aa). Residues 1–65 are Cytoplasmic-facing; the sequence is MVPSQEEPAA…GNQEPPEPPE (65 aa). A helical transmembrane segment spans residues 66–86; the sequence is GGWGWLVMLAAMWCNGSVFGI. Over 87–113 the chain is Extracellular; it reads QNAYGVLFVSMLETFGAKDDDNMAFKA. A helical membrane pass occupies residues 114-134; the sequence is AWVGSLSMGMIFFCCPIVSVF. The Cytoplasmic portion of the chain corresponds to 135 to 143; the sequence is TDMFGCRRT. A helical transmembrane segment spans residues 144–164; it reads AVLGAAVGFVGLMSSSFVSSI. Topologically, residues 165–170 are extracellular; the sequence is EPLYFT. Residues 171–191 traverse the membrane as a helical segment; sequence YGVVFACGCSFAYQPSLVILG. Residues 192-199 are Cytoplasmic-facing; it reads HYFKKRLG. Residues 200–220 form a helical membrane-spanning segment; that stretch reads LVNGIVTAGSSVFTILLPLLL. The Extracellular segment spans residues 221–227; that stretch reads GNLTSTV. A helical transmembrane segment spans residues 228–248; the sequence is GLCYTLRILCIFMFVLFLAGF. Topologically, residues 249–290 are cytoplasmic; that stretch reads TYRPLVPSSKEKESEDSRSSFFSRRKLSPPKKIFNFALFKET. The residue at position 262 (Ser262) is a Phosphoserine. Residues 291 to 311 form a helical membrane-spanning segment; the sequence is AYAVWAAGIPLALFGYFVPYV. Topologically, residues 312–328 are extracellular; it reads HLMNHVKERFKDVNNKE. A helical membrane pass occupies residues 329 to 349; it reads VLFMCIGVTSGVGRLLFGRIA. Residue Asp350 is a topological domain, cytoplasmic. Residues 351–371 traverse the membrane as a helical segment; sequence YLPGVKKVYLQVLSFFFIGLT. Residues 372–395 lie on the Extracellular side of the membrane; the sequence is SMMIPLCSVFGALIALCLIMGLFD. Residues 396 to 416 traverse the membrane as a helical segment; the sequence is GCFISIMAPIAFELVGPQDAS. The Cytoplasmic portion of the chain corresponds to 417 to 418; sequence QA. A helical membrane pass occupies residues 419–439; the sequence is IGFLLGFMSIPMTVGPPVAGL. The Extracellular segment spans residues 440–450; it reads LHDKLGSYDLA. A helical transmembrane segment spans residues 451-471; the sequence is FYLAGIPPFIGGAVLCLIPWI. Over 472–514 the chain is Cytoplasmic; sequence HSKKQREISKNTGGEKMEKMLANQSSLLSSSSGIFKKESDSII. Phosphoserine is present on residues Ser497, Ser500, Ser502, and Ser503.

It belongs to the major facilitator superfamily. Monocarboxylate porter (TC 2.A.1.13) family. Not N-glycosylated. As to expression, strongly expressed in intestine, placenta and liver. In small intestine is detected in the basolateral membrane (at protein level).

The protein localises to the cell membrane. The protein resides in the basolateral cell membrane. It carries out the reaction L-tryptophan(in) = L-tryptophan(out). The catalysed reaction is L-tyrosine(in) = L-tyrosine(out). The enzyme catalyses L-phenylalanine(in) = L-phenylalanine(out). It catalyses the reaction 3,3',5-triiodo-L-thyronine(out) = 3,3',5-triiodo-L-thyronine(in). It carries out the reaction L-thyroxine(out) = L-thyroxine(in). Sodium- and proton-independent thyroid hormones and aromatic acids transporter. Mediates both uptake and efflux of 3,5,3'-triiodothyronine (T3) and 3,5,3',5'-tetraiodothyronine (T4) with high affinity, suggesting a role in the homeostasis of thyroid hormone levels. Responsible for low affinity bidirectional transport of the aromatic amino acids, such as phenylalanine, tyrosine, tryptophan and L-3,4-dihydroxyphenylalanine (L-dopa). Plays an important role in homeostasis of aromatic amino acids. The chain is Monocarboxylate transporter 10 (Slc16a10) from Rattus norvegicus (Rat).